The primary structure comprises 148 residues: Ubiquitin-conjugating enzyme E2 29 (148 aa).

One can recognise a UBC core domain in the interval 1–147 (MATRRILKEL…ARSWTQKYAL (147 aa)). C85 acts as the Glycyl thioester intermediate in catalysis.

The protein belongs to the ubiquitin-conjugating enzyme family.

It catalyses the reaction S-ubiquitinyl-[E1 ubiquitin-activating enzyme]-L-cysteine + [E2 ubiquitin-conjugating enzyme]-L-cysteine = [E1 ubiquitin-activating enzyme]-L-cysteine + S-ubiquitinyl-[E2 ubiquitin-conjugating enzyme]-L-cysteine.. It functions in the pathway protein modification; protein ubiquitination. Functionally, accepts the ubiquitin from the E1 complex and catalyzes its covalent attachment to other proteins. This chain is Ubiquitin-conjugating enzyme E2 29 (UBC29), found in Arabidopsis thaliana (Mouse-ear cress).